The primary structure comprises 360 residues: UPF0324 membrane protein DVU_0123 (360 aa).

10 helical membrane passes run 20-42, 57-79, 100-122, 142-164, 171-193, 203-225, 232-254, 278-297, 310-327, and 337-359; these read VTESLPGLLLVCAVALVASFVAP, KDFILAIIFGIIIRNTVGVPAVF, SYSLAGLVSVGAQALVFIAVFLF, AACLAAGMSVCGVSATIAIAPAV, MAYSIAVVLMFGLLALIAFPLIG, FGAFAGVGIVNSAQVLAAGFGFS, AGIYNIGRVVFLPFVVLMLAIMA, FPLFVLGFLAIVCLNTAGVL, EWAFLLGFASIGLTTRLS, and FLFGFGVAGLKAALALAAVLLFM.

The protein belongs to the UPF0324 family.

Its subcellular location is the cell membrane. This Nitratidesulfovibrio vulgaris (strain ATCC 29579 / DSM 644 / CCUG 34227 / NCIMB 8303 / VKM B-1760 / Hildenborough) (Desulfovibrio vulgaris) protein is UPF0324 membrane protein DVU_0123.